The primary structure comprises 89 residues: Large ribosomal subunit protein uL29c (89 aa).

Belongs to the universal ribosomal protein uL29 family.

It localises to the plastid. It is found in the chloroplast. The chain is Large ribosomal subunit protein uL29c (rpl29) from Trieres chinensis (Marine centric diatom).